Consider the following 217-residue polypeptide: Pyrrolidone-carboxylate peptidase (217 aa).

Active-site residues include glutamate 78, cysteine 141, and histidine 168.

Belongs to the peptidase C15 family. Homotetramer.

It localises to the cytoplasm. It carries out the reaction Release of an N-terminal pyroglutamyl group from a polypeptide, the second amino acid generally not being Pro.. Its function is as follows. Removes 5-oxoproline from various penultimate amino acid residues except L-proline. This Treponema denticola (strain ATCC 35405 / DSM 14222 / CIP 103919 / JCM 8153 / KCTC 15104) protein is Pyrrolidone-carboxylate peptidase.